A 37-amino-acid chain; its full sequence is Large ribosomal subunit protein bL36 (37 aa).

The protein belongs to the bacterial ribosomal protein bL36 family.

In Bordetella bronchiseptica (strain ATCC BAA-588 / NCTC 13252 / RB50) (Alcaligenes bronchisepticus), this protein is Large ribosomal subunit protein bL36.